Reading from the N-terminus, the 459-residue chain is Ribulose bisphosphate carboxylase (459 aa).

Asn111 contributes to the substrate binding site. Lys166 (proton acceptor) is an active-site residue. Lys168 lines the substrate pocket. Residues Lys191, Asp193, and Glu194 each coordinate Mg(2+). Residue Lys191 is modified to N6-carboxylysine. His287 (proton acceptor) is an active-site residue. The substrate site is built by Arg288, His321, and Ser368.

It belongs to the RuBisCO large chain family. Type II subfamily. As to quaternary structure, the complex is approximately 350 kDa when isolated from either T.denitrificans or R.sphaeroides, suggesting a homohexamer or homooctamer structure. Requires Mg(2+) as cofactor.

The catalysed reaction is 2 (2R)-3-phosphoglycerate + 2 H(+) = D-ribulose 1,5-bisphosphate + CO2 + H2O. The enzyme catalyses D-ribulose 1,5-bisphosphate + O2 = 2-phosphoglycolate + (2R)-3-phosphoglycerate + 2 H(+). RuBisCO catalyzes two reactions: the carboxylation of D-ribulose 1,5-bisphosphate, the primary event in carbon dioxide fixation, as well as the oxidative fragmentation of the pentose substrate. Both reactions occur simultaneously and in competition at the same active site. This Thiobacillus denitrificans (strain ATCC 25259 / T1) protein is Ribulose bisphosphate carboxylase (cbbM).